A 276-amino-acid polypeptide reads, in one-letter code: Shikimate dehydrogenase (NADP(+)) (276 aa).

Shikimate is bound by residues 20–22 (SRS) and T67. K71 serves as the catalytic Proton acceptor. D83 contributes to the NADP(+) binding site. Shikimate contacts are provided by N92 and D107. NADP(+) is bound by residues 131 to 135 (GAGGA) and I217. Y219 contributes to the shikimate binding site. G240 contributes to the NADP(+) binding site.

This sequence belongs to the shikimate dehydrogenase family. Homodimer.

It catalyses the reaction shikimate + NADP(+) = 3-dehydroshikimate + NADPH + H(+). Its pathway is metabolic intermediate biosynthesis; chorismate biosynthesis; chorismate from D-erythrose 4-phosphate and phosphoenolpyruvate: step 4/7. Involved in the biosynthesis of the chorismate, which leads to the biosynthesis of aromatic amino acids. Catalyzes the reversible NADPH linked reduction of 3-dehydroshikimate (DHSA) to yield shikimate (SA). This is Shikimate dehydrogenase (NADP(+)) from Acidiphilium cryptum (strain JF-5).